The sequence spans 278 residues: Alcohol dehydrogenase-related 31 kDa protein (278 aa).

Residue 11-34 coordinates NAD(+); the sequence is YVADCGGIALETSKVLMTKNIAKL. Substrate is bound at residue Ser139. Tyr152 (proton acceptor) is an active-site residue.

It belongs to the short-chain dehydrogenases/reductases (SDR) family.

The protein is Alcohol dehydrogenase-related 31 kDa protein (Adhr) of Drosophila pseudoobscura pseudoobscura (Fruit fly).